We begin with the raw amino-acid sequence, 487 residues long: WD-40 repeat-containing protein MSI5 (487 aa).

M1 is modified (N-acetylmethionine). Low complexity predominate over residues 1–12 (MESEAAATVQAT). Residues 1–44 (MESEAAATVQATRPRRAPRTPVTAILTDKRRRKPKSNNESQLPF) form a disordered region. The short motif at 14–21 (PRRAPRTP) is the Nuclear localization signal element. WD repeat units lie at residues 142–182 (IHPG…DRYA), 197–237 (GHQD…TMAG), 270–310 (GHKD…SPAM), 315–355 (AHDA…SNGV), 364–404 (GHRA…KKSE), and 419–466 (GHRD…YRPE). Residues 236–268 (AGSDSKSPGSSFKQTGEGSDKTGGPSVGPRGIY) form a disordered region. Polar residues predominate over residues 237 to 252 (GSDSKSPGSSFKQTGE). The DWD box motif lies at 288–303 (FCSVGDDSCLMLWDAR).

This sequence belongs to the WD repeat RBAP46/RBAP48/MSI1 family. As to quaternary structure, interacts with AHL16. Interacts with LHP1, PDP2, PDP3 and PDP6. Component of the PRC2 (polycomb repressive complex 2) complex which regulates histone methylation on histone H3K27.

Its subcellular location is the nucleus. In terms of biological role, core histone-binding subunit that may target chromatin assembly factors, chromatin remodeling factors and histone deacetylases to their histone substrates in a manner that is regulated by nucleosomal DNA. Acts together with PDP1 and MSI4/FVE to regulate the function of the PRC2 complex on FLC. This Arabidopsis thaliana (Mouse-ear cress) protein is WD-40 repeat-containing protein MSI5.